The following is a 203-amino-acid chain: Snake venom metalloproteinase adamalysin-2 (203 aa).

The Peptidase M12B domain maps to 7-203 (RYIELVVVAD…YKPQCILNKP (197 aa)). Ca(2+) is bound by residues glutamate 10 and aspartate 94. Disulfide bonds link cysteine 118-cysteine 198 and cysteine 158-cysteine 165. Histidine 143 is a Zn(2+) binding site. Glutamate 144 is an active-site residue. Zn(2+)-binding residues include histidine 147 and histidine 153. Residues cysteine 198 and asparagine 201 each coordinate Ca(2+).

Belongs to the venom metalloproteinase (M12B) family. P-I subfamily. In terms of assembly, monomer. Zn(2+) serves as cofactor. As to expression, expressed by the venom gland.

The protein localises to the secreted. The enzyme catalyses Cleavage of 1-Phe-|-Val-2, 5-His-|-Leu-6, 14-Ala-|-Leu-15, 15-Leu-|-Tyr-16, and 16-Tyr-|-Leu-17 of insulin B chain.. Has no significant hemorrhagic activity, but inactivates serpins by limited proteolysis of their reactive-site loops. This Crotalus adamanteus (Eastern diamondback rattlesnake) protein is Snake venom metalloproteinase adamalysin-2.